The primary structure comprises 431 residues: Aspartate--tRNA(Asp/Asn) ligase (431 aa).

Glutamate 170 lines the L-aspartate pocket. The segment at 192 to 195 (QLYK) is aspartate. Arginine 214 is an L-aspartate binding site. Residues 214–216 (RAE), 222–224 (RHL), and glutamate 354 each bind ATP. Positions 354 and 357 each coordinate Mg(2+). L-aspartate is bound by residues serine 357 and arginine 361. Residue 402–405 (GLER) participates in ATP binding.

It belongs to the class-II aminoacyl-tRNA synthetase family. Type 2 subfamily. Homodimer. It depends on Mg(2+) as a cofactor.

It is found in the cytoplasm. It catalyses the reaction tRNA(Asx) + L-aspartate + ATP = L-aspartyl-tRNA(Asx) + AMP + diphosphate. In terms of biological role, aspartyl-tRNA synthetase with relaxed tRNA specificity since it is able to aspartylate not only its cognate tRNA(Asp) but also tRNA(Asn). Reaction proceeds in two steps: L-aspartate is first activated by ATP to form Asp-AMP and then transferred to the acceptor end of tRNA(Asp/Asn). This chain is Aspartate--tRNA(Asp/Asn) ligase, found in Methanopyrus kandleri (strain AV19 / DSM 6324 / JCM 9639 / NBRC 100938).